We begin with the raw amino-acid sequence, 415 residues long: MQMSYAIRCAFYQLLLAALMLVAMLQLLYLSLLSGLHGQEEQEQYFEFFPPSPRSVDQVKSQLRTALASGGVLDASGDYRVYRGLLKTTMDPNDVILATHASVDNLLHLSGLLERWEGPLSVSVFAATKEEAQLATVLAYALSSHCPEMRARVAMHLVCPSRYEAAVPDPREPGEFALLRSCQEVFDKLARVAQPGINYALGTNTSYPNNLLRNLAREEANYALVIDVDMVPSEGLWRGLREMLDQSNHWDGTALVVPAFEIRRSRRMPMNKNELVQLYQVGEVRPFYYGLCTPCHAPTNYSRWVNLPEESLLRPAYVVPWRDPWEPFYVAGGKVPTFDERFRQYGFNRISQACELHVAGFNFEVLNEGFLVHKGFKEALKFHPQKEAENQRNKILYRQFKQELKARYPNSPHRC.

The Cytoplasmic portion of the chain corresponds to 1 to 8; sequence MQMSYAIR. A helical; Signal-anchor for type II membrane protein membrane pass occupies residues 9–36; it reads CAFYQLLLAALMLVAMLQLLYLSLLSGL. The Lumenal segment spans residues 37 to 415; that stretch reads HGQEEQEQYF…ARYPNSPHRC (379 aa). The N-linked (GlcNAc...) asparagine glycan is linked to Asn-204. Mn(2+)-binding residues include Asp-227 and Asp-229. N-linked (GlcNAc...) asparagine glycosylation is present at Asn-300.

This sequence belongs to the glycosyltransferase 49 family. Interacts with LARGE1 and LARGE2. Requires Mn(2+) as cofactor.

Its subcellular location is the golgi apparatus membrane. It carries out the reaction 3-O-[beta-D-Xyl-(1-&gt;4)-Rib-ol-P-Rib-ol-P-3-beta-D-GalNAc-(1-&gt;3)-beta-D-GlcNAc-(1-&gt;4)-(O-6-P-alpha-D-Man)]-Thr-[protein] + UDP-alpha-D-glucuronate = 3-O-[beta-D-GlcA-(1-&gt;3)-beta-D-Xyl-(1-&gt;4)-Rib-ol-P-Rib-ol-P-3-beta-D-GalNAc-(1-&gt;3)-beta-D-GlcNAc-(1-&gt;4)-(O-6-P-alpha-D-Man)]-Thr-[protein] + UDP + H(+). The protein operates within protein modification; protein glycosylation. In terms of biological role, beta-1,4-glucuronyltransferase involved in O-mannosylation of alpha-dystroglycan (DAG1). Transfers a glucuronic acid (GlcA) residue onto a xylose (Xyl) acceptor to produce the glucuronyl-beta-1,4-xylose-beta disaccharide primer, which is further elongated by LARGE1, during synthesis of phosphorylated O-mannosyl glycan. Phosphorylated O-mannosyl glycan is a carbohydrate structure present in alpha-dystroglycan (DAG1), which is required for binding laminin G-like domain-containing extracellular proteins with high affinity. Required for axon guidance; via its function in O-mannosylation of alpha-dystroglycan (DAG1). The chain is Beta-1,4-glucuronyltransferase 1 from Mus musculus (Mouse).